Reading from the N-terminus, the 180-residue chain is Ribosome maturation factor RimM (180 aa).

The PRC barrel domain maps to glutamate 104–leucine 177.

It belongs to the RimM family. As to quaternary structure, binds ribosomal protein uS19.

Its subcellular location is the cytoplasm. Functionally, an accessory protein needed during the final step in the assembly of 30S ribosomal subunit, possibly for assembly of the head region. Essential for efficient processing of 16S rRNA. May be needed both before and after RbfA during the maturation of 16S rRNA. It has affinity for free ribosomal 30S subunits but not for 70S ribosomes. In Synechococcus sp. (strain CC9902), this protein is Ribosome maturation factor RimM.